Reading from the N-terminus, the 663-residue chain is Guanine nucleotide exchange factor subunit RGP1 (663 aa).

Ser351, Ser354, Ser357, Ser363, Ser364, and Ser370 each carry phosphoserine. Positions 412–443 are disordered; that stretch reads GKDEDSSDPEPNDSHFSNEMVTSAESSLRSDA. The span at 426–440 shows a compositional bias: polar residues; the sequence is HFSNEMVTSAESSLR.

The protein belongs to the RGP1 family. As to quaternary structure, forms a complex with RIC1.

Its subcellular location is the golgi apparatus. The RIC1-RGP1 complex acts as a guanine nucleotide exchange factor (GEF), which activates YPT6 by exchanging bound GDP for free GTP. It is thereby required for efficient fusion of endosome-derived vesicles with the Golgi. The RIC1-RGP1 participates in the recycling of SNC1, presumably by mediating fusion of endosomal vesicles with the Golgi compartment. Its function is as follows. Required for proper mitotic growth. The chain is Guanine nucleotide exchange factor subunit RGP1 from Saccharomyces cerevisiae (strain ATCC 204508 / S288c) (Baker's yeast).